A 488-amino-acid chain; its full sequence is Galactose-1-phosphate uridylyltransferase (488 aa).

This sequence belongs to the galactose-1-phosphate uridylyltransferase type 2 family.

The protein localises to the cytoplasm. It catalyses the reaction alpha-D-galactose 1-phosphate + UDP-alpha-D-glucose = alpha-D-glucose 1-phosphate + UDP-alpha-D-galactose. The protein operates within carbohydrate metabolism; galactose metabolism. This Lactobacillus helveticus (Lactobacillus suntoryeus) protein is Galactose-1-phosphate uridylyltransferase (galT).